Consider the following 420-residue polypeptide: Chaperone protein dnaJ 3 (420 aa).

The J domain maps to 14 to 75; that stretch reads KFYEILGVPK…EKREIYDQYG (62 aa). The CR-type zinc finger occupies 135–219; the sequence is GTMKKLSLSR…CKGDKVIPEK (85 aa). Zn(2+) is bound by residues Cys-148, Cys-151, Cys-164, Cys-167, Cys-191, Cys-194, Cys-207, and Cys-210. CXXCXGXG motif repeat units lie at residues 148 to 155, 164 to 171, 191 to 198, and 207 to 214; these read CSKCNGKG, CGGCQGSG, CNECKGTG, and CPQCKGDK. The segment at 376–420 is disordered; that stretch reads ETTLHDVNIEDEMRRKAQAQREAYDDDDEDDDHPGGAQRVQCAQQ. A compositionally biased stretch (basic and acidic residues) spans 377-390; it reads TTLHDVNIEDEMRR. The residue at position 417 (Cys-417) is a Cysteine methyl ester. Cys-417 carries S-farnesyl cysteine lipidation. Residues 418 to 420 constitute a propeptide, removed in mature form; that stretch reads AQQ.

The protein belongs to the DnaJ family. A/I subfamily. As to quaternary structure, homodimer. It depends on Zn(2+) as a cofactor. Post-translationally, farnesylated. As to expression, roots, shoots, flowers, siliques and cotyledons.

It is found in the membrane. Functionally, plays a continuous role in plant development probably in the structural organization of compartments. The protein is Chaperone protein dnaJ 3 (ATJ3) of Arabidopsis thaliana (Mouse-ear cress).